A 253-amino-acid polypeptide reads, in one-letter code: Homeotic protein ultrabithorax (253 aa).

Low complexity predominate over residues 125-141; it reads GNTSNGSNAPNAANGQN. The tract at residues 125–193 is disordered; that stretch reads GNTSNGSNAP…GNGTAGGVPQ (69 aa). Gly residues predominate over residues 176 to 189; it reads RGGGSAGGGNGTAG. Residues 237 to 242 carry the Antp-type hexapeptide motif; that stretch reads FYPWMA.

This sequence belongs to the Antp homeobox family.

The protein localises to the nucleus. In terms of biological role, sequence-specific transcription factor which is part of a developmental regulatory system that provides cells with specific positional identities on the anterior-posterior axis. Binds the consensus region 5'-TTAAT[GT][GA]-3'. This homeotic protein controls development of the cells in the posterior thoracic and first abdominal segments. It activates the synthesis of the decapentaplegic (DPP) growth factor. The chain is Homeotic protein ultrabithorax (Ubx) from Drosophila funebris (Fruit fly).